The chain runs to 198 residues: Imidazoleglycerol-phosphate dehydratase (198 aa).

The protein belongs to the imidazoleglycerol-phosphate dehydratase family.

It localises to the cytoplasm. It catalyses the reaction D-erythro-1-(imidazol-4-yl)glycerol 3-phosphate = 3-(imidazol-4-yl)-2-oxopropyl phosphate + H2O. The protein operates within amino-acid biosynthesis; L-histidine biosynthesis; L-histidine from 5-phospho-alpha-D-ribose 1-diphosphate: step 6/9. The protein is Imidazoleglycerol-phosphate dehydratase of Magnetococcus marinus (strain ATCC BAA-1437 / JCM 17883 / MC-1).